Reading from the N-terminus, the 354-residue chain is Holliday junction branch migration complex subunit RuvB (354 aa).

Positions 1-22 (MTIQTDDFAPAPPRVVSAAPAS) are disordered. The large ATPase domain (RuvB-L) stretch occupies residues 5–193 (TDDFAPAPPR…FGIVARLEFY (189 aa)). Residues Leu-32, Arg-33, Gly-74, Lys-77, Thr-78, Thr-79, 140–142 (EDY), Arg-183, Tyr-193, and Arg-230 contribute to the ATP site. Thr-78 is a Mg(2+) binding site. A small ATPAse domain (RuvB-S) region spans residues 194 to 264 (TPEELALIVR…IAHKALVMLD (71 aa)). Residues 267–354 (PQGFDLMDRK…RSDGQDLFGI (88 aa)) are head domain (RuvB-H). DNA-binding residues include Arg-303, Arg-322, and Arg-327.

This sequence belongs to the RuvB family. As to quaternary structure, homohexamer. Forms an RuvA(8)-RuvB(12)-Holliday junction (HJ) complex. HJ DNA is sandwiched between 2 RuvA tetramers; dsDNA enters through RuvA and exits via RuvB. An RuvB hexamer assembles on each DNA strand where it exits the tetramer. Each RuvB hexamer is contacted by two RuvA subunits (via domain III) on 2 adjacent RuvB subunits; this complex drives branch migration. In the full resolvosome a probable DNA-RuvA(4)-RuvB(12)-RuvC(2) complex forms which resolves the HJ.

It localises to the cytoplasm. It catalyses the reaction ATP + H2O = ADP + phosphate + H(+). Its function is as follows. The RuvA-RuvB-RuvC complex processes Holliday junction (HJ) DNA during genetic recombination and DNA repair, while the RuvA-RuvB complex plays an important role in the rescue of blocked DNA replication forks via replication fork reversal (RFR). RuvA specifically binds to HJ cruciform DNA, conferring on it an open structure. The RuvB hexamer acts as an ATP-dependent pump, pulling dsDNA into and through the RuvAB complex. RuvB forms 2 homohexamers on either side of HJ DNA bound by 1 or 2 RuvA tetramers; 4 subunits per hexamer contact DNA at a time. Coordinated motions by a converter formed by DNA-disengaged RuvB subunits stimulates ATP hydrolysis and nucleotide exchange. Immobilization of the converter enables RuvB to convert the ATP-contained energy into a lever motion, pulling 2 nucleotides of DNA out of the RuvA tetramer per ATP hydrolyzed, thus driving DNA branch migration. The RuvB motors rotate together with the DNA substrate, which together with the progressing nucleotide cycle form the mechanistic basis for DNA recombination by continuous HJ branch migration. Branch migration allows RuvC to scan DNA until it finds its consensus sequence, where it cleaves and resolves cruciform DNA. In Variovorax paradoxus (strain S110), this protein is Holliday junction branch migration complex subunit RuvB.